Here is a 487-residue protein sequence, read N- to C-terminus: Schwannomin-interacting protein 1 (487 aa).

4 disordered regions span residues 1-74 (MERS…VSAL), 88-221 (VIDE…PVPP), 236-260 (FREQ…NERE), and 308-354 (SGSD…SLDD). Over residues 14-27 (DQGKHSDSDYREDG) the composition is skewed to basic and acidic residues. Residues 32–67 (SDAGSSSSSSRASSQSNSTKVTPCSECKSSSSPGGS) are compositionally biased toward low complexity. A compositionally biased stretch (acidic residues) spans 92–106 (WAPEEDGEEEEEEDE). 2 stretches are compositionally biased toward basic and acidic residues: residues 107 to 123 (RDQR…REPG) and 153 to 162 (HQHDPQDLRH). A Phosphoserine modification is found at Ser117. The span at 242–255 (RNQGQARTNSTSAQ) shows a compositional bias: polar residues. Residues 309–323 (GSDKDSDADDSKTET) show a composition bias toward basic and acidic residues. The span at 324-335 (SLDTPLSPMSKQ) shows a compositional bias: polar residues. The span at 344–354 (TTEEESESLDD) shows a compositional bias: acidic residues. A coiled-coil region spans residues 424 to 458 (IGQLQVIVNDLHSQIESLNEELVQLLLIRDELHTE).

Belongs to the SCHIP1 family. As to quaternary structure, homooligomer (via coiled coil domain). Interacts with NF2; the interaction is direct. Interacts with ANK3. As to expression, preferentially expressed in brain, skeletal muscles and heart. Also expressed in detected in pancreas, kidney, liver, lung, and placenta.

It is found in the cytoplasm. This is Schwannomin-interacting protein 1 from Homo sapiens (Human).